The sequence spans 513 residues: Zinc finger CCCH-type with G patch domain-containing protein (513 aa).

The segment at proline 155–leucine 178 adopts a C3H1-type zinc-finger fold. 2 stretches are compositionally biased toward acidic residues: residues aspartate 252–serine 261 and serine 273–leucine 283. The tract at residues aspartate 252–leucine 283 is disordered. The G-patch domain occupies threonine 312 to glutamate 358. Disordered stretches follow at residues proline 411 to leucine 430 and glutamine 477 to phenylalanine 513. A compositionally biased stretch (polar residues) spans glutamine 477–arginine 495. Residues serine 496 to phenylalanine 513 show a composition bias toward basic and acidic residues.

The protein resides in the nucleus. Functionally, transcription repressor. The chain is Zinc finger CCCH-type with G patch domain-containing protein from Drosophila sechellia (Fruit fly).